Consider the following 1000-residue polypeptide: Ribosome assembly protein 1 (1000 aa).

One can recognise a tr-type G domain in the interval 17–246 (ENIRNFTLLA…YEKKLGLKQK (230 aa)). GTP-binding positions include 26–33 (AHVDHGKT), 100–104 (DSPGH), and 154–157 (NKMD).

It belongs to the TRAFAC class translation factor GTPase superfamily. Classic translation factor GTPase family.

The protein localises to the cytoplasm. It carries out the reaction GTP + H2O = GDP + phosphate + H(+). With respect to regulation, GTPase activity is stimulated in the presence of 60S subunits. Its function is as follows. GTPase involved in the biogenesis of the 60S ribosomal subunit and translational activation of ribosomes. Together with sdo1, may trigger the GTP-dependent release of tif6 from 60S pre-ribosomes in the cytoplasm, thereby activating ribosomes for translation competence by allowing 80S ribosome assembly and facilitating tif6 recycling to the nucleus, where it is required for 60S rRNA processing and nuclear export. Inhibits GTPase activity of ribosome-bound EF-2. This is Ribosome assembly protein 1 (ria1) from Schizosaccharomyces pombe (strain 972 / ATCC 24843) (Fission yeast).